The chain runs to 210 residues: Pyridoxine/pyridoxamine 5'-phosphate oxidase (210 aa).

Substrate is bound by residues 7 to 10 and Lys-65; that span reads RDEY. FMN is bound by residues 60–65, 75–76, Arg-81, Lys-82, and Gln-104; these read RMVLLK and FT. Substrate-binding residues include Tyr-122, Arg-126, and Ser-130. Residues 139 to 140 and Trp-183 each bind FMN; that span reads QS. 189–191 is a substrate binding site; that stretch reads RLH. Arg-193 is a binding site for FMN.

The protein belongs to the pyridoxamine 5'-phosphate oxidase family. As to quaternary structure, homodimer. FMN is required as a cofactor.

It catalyses the reaction pyridoxamine 5'-phosphate + O2 + H2O = pyridoxal 5'-phosphate + H2O2 + NH4(+). The catalysed reaction is pyridoxine 5'-phosphate + O2 = pyridoxal 5'-phosphate + H2O2. The protein operates within cofactor metabolism; pyridoxal 5'-phosphate salvage; pyridoxal 5'-phosphate from pyridoxamine 5'-phosphate: step 1/1. Its pathway is cofactor metabolism; pyridoxal 5'-phosphate salvage; pyridoxal 5'-phosphate from pyridoxine 5'-phosphate: step 1/1. In terms of biological role, catalyzes the oxidation of either pyridoxine 5'-phosphate (PNP) or pyridoxamine 5'-phosphate (PMP) into pyridoxal 5'-phosphate (PLP). This is Pyridoxine/pyridoxamine 5'-phosphate oxidase from Haemophilus influenzae (strain ATCC 51907 / DSM 11121 / KW20 / Rd).